The following is a 710-amino-acid chain: WD repeat-containing protein CG11141 (710 aa).

WD repeat units follow at residues 31–70 (FFPA…MQKL) and 133–172 (LHKC…HLSK). The disordered stretch occupies residues 283-307 (LNPKQRSEPSGTHHTSASTSSTRHS). Low complexity predominate over residues 292–307 (SGTHHTSASTSSTRHS). A Phosphothreonine modification is found at threonine 488. Serine 553 is subject to Phosphoserine. 2 disordered regions span residues 612–635 (ASIQ…GEPV) and 685–710 (DPLA…FLDN). 2 stretches are compositionally biased toward polar residues: residues 613-624 (SIQTSSRENATN) and 694-704 (PATSDSNTSSE).

It belongs to the WD repeat KIAA0329 family.

This chain is WD repeat-containing protein CG11141, found in Drosophila melanogaster (Fruit fly).